The sequence spans 308 residues: L-lactate dehydrogenase 2 (308 aa).

Residues Val-13, Asp-34, Arg-39, Tyr-64, and 78–79 (GV) each bind NAD(+). Arg-87 provides a ligand contact to substrate. Thr-100 lines the NAD(+) pocket. 119–122 (NPVD) is a binding site for substrate. Thr-142 contributes to the NAD(+) binding site. Residue 147 to 150 (DSMR) coordinates substrate. His-174 (proton acceptor) is an active-site residue. Residue Thr-224 coordinates substrate.

This sequence belongs to the LDH/MDH superfamily. LDH family. In terms of assembly, homotetramer.

It localises to the cytoplasm. It catalyses the reaction (S)-lactate + NAD(+) = pyruvate + NADH + H(+). The protein operates within fermentation; pyruvate fermentation to lactate; (S)-lactate from pyruvate: step 1/1. In terms of biological role, catalyzes the conversion of lactate to pyruvate. The sequence is that of L-lactate dehydrogenase 2 from Lactobacillus acidophilus (strain ATCC 700396 / NCK56 / N2 / NCFM).